The following is a 349-amino-acid chain: UPF0284 protein MA_3887 (349 aa).

This sequence belongs to the UPF0284 family.

The protein is UPF0284 protein MA_3887 of Methanosarcina acetivorans (strain ATCC 35395 / DSM 2834 / JCM 12185 / C2A).